A 548-amino-acid chain; its full sequence is Chaperonin GroEL (548 aa).

ATP is bound by residues 30–33 (TLGP), Lys51, 87–91 (DGTTT), Gly415, and Asp496.

This sequence belongs to the chaperonin (HSP60) family. In terms of assembly, forms a cylinder of 14 subunits composed of two heptameric rings stacked back-to-back. Interacts with the co-chaperonin GroES.

It is found in the cytoplasm. The enzyme catalyses ATP + H2O + a folded polypeptide = ADP + phosphate + an unfolded polypeptide.. Its function is as follows. Together with its co-chaperonin GroES, plays an essential role in assisting protein folding. The GroEL-GroES system forms a nano-cage that allows encapsulation of the non-native substrate proteins and provides a physical environment optimized to promote and accelerate protein folding. The sequence is that of Chaperonin GroEL from Haemophilus influenzae (strain PittGG).